We begin with the raw amino-acid sequence, 344 residues long: Uroporphyrinogen decarboxylase (344 aa).

Substrate is bound by residues 26-30 (RQAGR), aspartate 76, tyrosine 152, serine 207, and histidine 323.

Belongs to the uroporphyrinogen decarboxylase family. Homodimer.

Its subcellular location is the cytoplasm. It catalyses the reaction uroporphyrinogen III + 4 H(+) = coproporphyrinogen III + 4 CO2. It functions in the pathway porphyrin-containing compound metabolism; protoporphyrin-IX biosynthesis; coproporphyrinogen-III from 5-aminolevulinate: step 4/4. In terms of biological role, catalyzes the decarboxylation of four acetate groups of uroporphyrinogen-III to yield coproporphyrinogen-III. This chain is Uroporphyrinogen decarboxylase, found in Hyphomonas neptunium (strain ATCC 15444).